A 53-amino-acid chain; its full sequence is Conotoxin Ac4.3b (53 aa).

The propeptide occupies 1 to 11 (SDVRNAAVHER). Position 12 is a pyrrolidone carboxylic acid (Gln-12). At Glu-14 the chain carries 4-carboxyglutamate. A glycan (O-linked (HexNAc...) serine) is linked at Ser-18. Residues Pro-28, Pro-33, and Pro-48 each carry the 4-hydroxyproline modification. At Pro-48 the chain carries Proline amide. Positions 49–53 (GRRND) are excised as a propeptide.

Belongs to the conotoxin A superfamily. Contains 3 disulfide bonds. As to expression, expressed by the venom duct.

Its subcellular location is the secreted. Functionally, probable neurotoxin with ion channel inhibitor activity. In Conus achatinus (Little frog cone), this protein is Conotoxin Ac4.3b.